Consider the following 231-residue polypeptide: Large ribosomal subunit protein uL1 (231 aa).

The protein belongs to the universal ribosomal protein uL1 family. Part of the 50S ribosomal subunit.

In terms of biological role, binds directly to 23S rRNA. The L1 stalk is quite mobile in the ribosome, and is involved in E site tRNA release. Its function is as follows. Protein L1 is also a translational repressor protein, it controls the translation of the L11 operon by binding to its mRNA. This Ralstonia nicotianae (strain ATCC BAA-1114 / GMI1000) (Ralstonia solanacearum) protein is Large ribosomal subunit protein uL1.